The sequence spans 157 residues: Transcriptional repressor NrdR (157 aa).

The segment at 3-34 is a zinc-finger region; sequence CPHCHQNSSRVIDSRPTDEGRVIRRRRECENC. An ATP-cone domain is found at 49-139; sequence LLVIKKNGTR…VYRQFKDMNV (91 aa).

The protein belongs to the NrdR family. Zn(2+) serves as cofactor.

In terms of biological role, negatively regulates transcription of bacterial ribonucleotide reductase nrd genes and operons by binding to NrdR-boxes. This Latilactobacillus sakei subsp. sakei (strain 23K) (Lactobacillus sakei subsp. sakei) protein is Transcriptional repressor NrdR.